A 340-amino-acid polypeptide reads, in one-letter code: Immunoglobulin-binding protein 1 family member C (340 aa).

Disordered regions lie at residues 223 to 243 (KDSS…PPMK) and 292 to 340 (PEEF…QNMG). Residues 303 to 314 (EDQEKEEEDDEQ) show a composition bias toward acidic residues. A compositionally biased stretch (basic and acidic residues) spans 318-330 (RAREWDDWKDTHP).

It belongs to the IGBP1/TAP42 family.

This Homo sapiens (Human) protein is Immunoglobulin-binding protein 1 family member C.